A 392-amino-acid polypeptide reads, in one-letter code: Formate-dependent phosphoribosylglycinamide formyltransferase (392 aa).

N(1)-(5-phospho-beta-D-ribosyl)glycinamide contacts are provided by residues 22–23 and Glu-82; that span reads EL. ATP-binding positions include Arg-114, Lys-155, 160–165, 195–198, and Glu-203; these read SSGKGQ and EGVV. The region spanning 119–308 is the ATP-grasp domain; the sequence is RLAAEELQLP…EFALHVRAFL (190 aa). Mg(2+)-binding residues include Glu-267 and Glu-279. Residues Asp-286, Lys-355, and 362 to 363 contribute to the N(1)-(5-phospho-beta-D-ribosyl)glycinamide site; that span reads RR.

Belongs to the PurK/PurT family. As to quaternary structure, homodimer.

The catalysed reaction is N(1)-(5-phospho-beta-D-ribosyl)glycinamide + formate + ATP = N(2)-formyl-N(1)-(5-phospho-beta-D-ribosyl)glycinamide + ADP + phosphate + H(+). The protein operates within purine metabolism; IMP biosynthesis via de novo pathway; N(2)-formyl-N(1)-(5-phospho-D-ribosyl)glycinamide from N(1)-(5-phospho-D-ribosyl)glycinamide (formate route): step 1/1. Its function is as follows. Involved in the de novo purine biosynthesis. Catalyzes the transfer of formate to 5-phospho-ribosyl-glycinamide (GAR), producing 5-phospho-ribosyl-N-formylglycinamide (FGAR). Formate is provided by PurU via hydrolysis of 10-formyl-tetrahydrofolate. In Escherichia coli O157:H7, this protein is Formate-dependent phosphoribosylglycinamide formyltransferase.